We begin with the raw amino-acid sequence, 432 residues long: Protein arginine N-methyltransferase 2 (432 aa).

The segment covering 1 to 11 has biased composition (low complexity); sequence MESSSECSSIS. A disordered region spans residues 1 to 22; that stretch reads MESSSECSSISDFQDSTEGDDA. The 60-residue stretch at 29–88 folds into the SH3 domain; sequence LCMREYVVICDYVATDNTQLSLCSGDKVLLLNAVSQDWWWVNHNGTCGYVPASHLHDALN. The region spanning 101–405 is the SAM-dependent MTase PRMT-type domain; it reads DEEYYGSYKT…FERNSVWRRH (305 aa). Residues His114, Arg123, Gly147, Glu170, and Glu199 each contribute to the S-adenosyl-L-methionine site. Active-site residues include Glu213 and Glu222.

Belongs to the class I-like SAM-binding methyltransferase superfamily. Protein arginine N-methyltransferase family. Interacts with ctnnb1.

The protein localises to the cytoplasm. It is found in the nucleus. The catalysed reaction is L-arginyl-[protein] + 2 S-adenosyl-L-methionine = N(omega),N(omega)-dimethyl-L-arginyl-[protein] + 2 S-adenosyl-L-homocysteine + 2 H(+). Functionally, arginine methyltransferase that methylates the guanidino nitrogens of arginyl residues in proteins such as histones. Involved in growth regulation. Involved in embryonic dorsal development. The sequence is that of Protein arginine N-methyltransferase 2 (prmt2) from Xenopus laevis (African clawed frog).